The chain runs to 128 residues: Large ribosomal subunit protein bL17 (128 aa).

Belongs to the bacterial ribosomal protein bL17 family. As to quaternary structure, part of the 50S ribosomal subunit. Contacts protein L32.

This Streptococcus suis (strain 98HAH33) protein is Large ribosomal subunit protein bL17.